Reading from the N-terminus, the 493-residue chain is Probable cytosol aminopeptidase (493 aa).

The Mn(2+) site is built by lysine 258 and aspartate 263. The active site involves lysine 270. Residues aspartate 281, aspartate 340, and glutamate 342 each coordinate Mn(2+). Residue arginine 344 is part of the active site.

Belongs to the peptidase M17 family. Requires Mn(2+) as cofactor.

Its subcellular location is the cytoplasm. It catalyses the reaction Release of an N-terminal amino acid, Xaa-|-Yaa-, in which Xaa is preferably Leu, but may be other amino acids including Pro although not Arg or Lys, and Yaa may be Pro. Amino acid amides and methyl esters are also readily hydrolyzed, but rates on arylamides are exceedingly low.. The catalysed reaction is Release of an N-terminal amino acid, preferentially leucine, but not glutamic or aspartic acids.. Presumably involved in the processing and regular turnover of intracellular proteins. Catalyzes the removal of unsubstituted N-terminal amino acids from various peptides. This chain is Probable cytosol aminopeptidase, found in Caulobacter vibrioides (strain ATCC 19089 / CIP 103742 / CB 15) (Caulobacter crescentus).